We begin with the raw amino-acid sequence, 301 residues long: Oxygen-dependent coproporphyrinogen-III oxidase (301 aa).

Residue Ser90 participates in substrate binding. A divalent metal cation-binding residues include His94 and His104. The Proton donor role is filled by His104. Residue 106 to 108 participates in substrate binding; it reads NVR. Residues His143 and His173 each contribute to the a divalent metal cation site. The segment at 238–273 is important for dimerization; it reads YVEFNLVWDRGTLFGLQSGGRTESILMSLPPIVKWR. A substrate-binding site is contributed by 256–258; that stretch reads GGR.

Belongs to the aerobic coproporphyrinogen-III oxidase family. As to quaternary structure, homodimer. A divalent metal cation serves as cofactor.

Its subcellular location is the cytoplasm. It catalyses the reaction coproporphyrinogen III + O2 + 2 H(+) = protoporphyrinogen IX + 2 CO2 + 2 H2O. It functions in the pathway porphyrin-containing compound metabolism; protoporphyrin-IX biosynthesis; protoporphyrinogen-IX from coproporphyrinogen-III (O2 route): step 1/1. In terms of biological role, involved in the heme biosynthesis. Catalyzes the aerobic oxidative decarboxylation of propionate groups of rings A and B of coproporphyrinogen-III to yield the vinyl groups in protoporphyrinogen-IX. In Nitrosomonas eutropha (strain DSM 101675 / C91 / Nm57), this protein is Oxygen-dependent coproporphyrinogen-III oxidase.